A 1270-amino-acid chain; its full sequence is DNA-directed RNA polymerase subunit beta (1270 aa).

This sequence belongs to the RNA polymerase beta chain family. The RNAP catalytic core consists of 2 alpha, 1 beta, 1 beta' and 1 omega subunit. When a sigma factor is associated with the core the holoenzyme is formed, which can initiate transcription.

The catalysed reaction is RNA(n) + a ribonucleoside 5'-triphosphate = RNA(n+1) + diphosphate. Functionally, DNA-dependent RNA polymerase catalyzes the transcription of DNA into RNA using the four ribonucleoside triphosphates as substrates. The polypeptide is DNA-directed RNA polymerase subunit beta (Porphyromonas cangingivalis).